Reading from the N-terminus, the 653-residue chain is Thioredoxin domain-containing protein 3 homolog (653 aa).

A Thioredoxin domain is found at 9–114; it reads LQETLNTQEA…QETIQETLKN (106 aa). A disulfide bond links Cys-38 and Cys-41. The NDK 1 stretch occupies residues 155-299; it reads KQITVALIKP…FFFPDFKPPT (145 aa). The interval 300 to 323 is disordered; it reads YRSAKSAASRASGRRSKTPSQKPR. Low complexity predominate over residues 301 to 310; it reads RSAKSAASRA. NDK regions lie at residues 324–459 and 459–597; these read LQRT…IFHV and VEQT…QFDW. Residues 603 to 653 are disordered; that stretch reads QAEEGEVNETSGEQPTDEQSGETEKTEEDGEHEGAQSDQQQAVSEAMEKEE. Residues 617–633 are compositionally biased toward acidic residues; that stretch reads PTDEQSGETEKTEEDGE.

This sequence in the C-terminal section; belongs to the NDK family. In terms of tissue distribution, testis-specific.

In terms of biological role, may be required during the final stages of sperm tail maturation. May act by reducing disulfide bonds within the sperm components. This is Thioredoxin domain-containing protein 3 homolog (CiIC3) from Ciona intestinalis (Transparent sea squirt).